The primary structure comprises 350 residues: D-alanine--D-alanine ligase (350 aa).

Positions 133-334 (NDIFELNKIP…VSEVFDNLIG (202 aa)) constitute an ATP-grasp domain. 161-216 (FEKTSKAVYVKPCNAGSSVGVMRAETEEELEKAIQNAFQYDRRILVEEEIIGPELQ) is an ATP binding site. Positions 288, 300, and 302 each coordinate Mg(2+).

This sequence belongs to the D-alanine--D-alanine ligase family. Mg(2+) is required as a cofactor. Mn(2+) serves as cofactor.

It is found in the cytoplasm. It catalyses the reaction 2 D-alanine + ATP = D-alanyl-D-alanine + ADP + phosphate + H(+). Its pathway is cell wall biogenesis; peptidoglycan biosynthesis. In terms of biological role, cell wall formation. The sequence is that of D-alanine--D-alanine ligase from Finegoldia magna (strain ATCC 29328 / DSM 20472 / WAL 2508) (Peptostreptococcus magnus).